A 405-amino-acid polypeptide reads, in one-letter code: Magnesium-protoporphyrin IX monomethyl ester [oxidative] cyclase, chloroplastic (405 aa).

Residues 1–43 constitute a chloroplast transit peptide; that stretch reads MATEMALVKPISKFSTSSPIFSNSRYGKFTTVRMSSTSQSTTK.

Belongs to the AcsF family. Fe cation serves as cofactor.

The protein resides in the plastid. The protein localises to the chloroplast. The catalysed reaction is Mg-protoporphyrin IX 13-monomethyl ester + 3 NADPH + 3 O2 + 2 H(+) = 3,8-divinyl protochlorophyllide a + 3 NADP(+) + 5 H2O. It functions in the pathway porphyrin-containing compound metabolism; chlorophyll biosynthesis. Functionally, catalyzes the formation of the isocyclic ring in chlorophyll biosynthesis. Mediates the cyclase reaction, which results in the formation of divinylprotochlorophyllide (Pchlide) characteristic of all chlorophylls from magnesium-protoporphyrin IX 13-monomethyl ester (MgPMME). This is Magnesium-protoporphyrin IX monomethyl ester [oxidative] cyclase, chloroplastic (CRD1) from Gossypium hirsutum (Upland cotton).